We begin with the raw amino-acid sequence, 529 residues long: Cytochrome P450 monooxygenase ausG (529 aa).

Residues 31–51 (LLVVCGLPGLLLLFFVTAILL) traverse the membrane as a helical segment. Heme is bound at residue C470.

This sequence belongs to the cytochrome P450 family. Heme is required as a cofactor.

Its subcellular location is the membrane. It functions in the pathway secondary metabolite biosynthesis; terpenoid biosynthesis. Cytochrome P450 monooxygenase; part of the gene cluster that mediates the biosynthesis of calidodehydroaustin, a fungal meroterpenoid. The first step of the pathway is the synthesis of 3,5-dimethylorsellinic acid by the polyketide synthase ausA. 3,5-dimethylorsellinic acid is then prenylated by the polyprenyl transferase ausN. Further epoxidation by the FAD-dependent monooxygenase ausM and cyclization by the probable terpene cyclase ausL lead to the formation of protoaustinoid A. Protoaustinoid A is then oxidized to spiro-lactone preaustinoid A3 by the combined action of the FAD-binding monooxygenases ausB and ausC, and the dioxygenase ausE. Acid-catalyzed keto-rearrangement and ring contraction of the tetraketide portion of preaustinoid A3 by ausJ lead to the formation of preaustinoid A4. The aldo-keto reductase ausK, with the help of ausH, is involved in the next step by transforming preaustinoid A4 into isoaustinone which is in turn hydroxylated by the P450 monooxygenase ausI to form austinolide. The cytochrome P450 monooxygenase ausG modifies austinolide to austinol. Austinol is further acetylated to austin by the O-acetyltransferase ausP, which spontaneously changes to dehydroaustin. The cytochrome P450 monooxygenase ausR then converts dehydroaustin is into 7-dehydrodehydroaustin. The hydroxylation catalyzed by ausR permits the O-acetyltransferase ausQ to add an additional acetyl group to the molecule, leading to the formation of acetoxydehydroaustin. The short chain dehydrogenase ausT catalyzes the reduction of the double bond present between carbon atoms 1 and 2 to convert 7-dehydrodehydroaustin into 1,2-dihydro-7-hydroxydehydroaustin. AusQ catalyzes not only an acetylation reaction but also the addition of the PKS ausV diketide product to 1,2-dihydro-7-hydroxydehydroaustin, forming precalidodehydroaustin. Finally, the iron/alpha-ketoglutarate-dependent dioxygenase converts precalidodehydroaustin into calidodehydroaustin. The sequence is that of Cytochrome P450 monooxygenase ausG from Aspergillus calidoustus.